The primary structure comprises 265 residues: MAKVPDLFEDLKNCYSENEEYSSEIDHLSLNQKSFYDMSCDPLHEDCMSLSTSEISKTSQLTFKENVVVVAANGKILKKRRLSLSQFITDDDLEGIANDTEEVIMKPRSVAYNFHNNEKYNYIRIIKSQFILNDNLNQSIVRQTGGNYLMTAALQNLDDAVKFDMGAYTSEDSKLPVTLRISKTRLFVSAQNEDEPVLLKEMPETPKTIRDETNLLFFWERHGSKHYFKSVAQPKLFIATQERKLVHMARGQPSITDFRLLETQP.

A propeptide spanning residues M1–R108 is cleaved from the precursor. K78 carries the post-translational modification N6-acetyllysine. A nuclear localization signal (NLS) region spans residues K78–L82. The residue at position 83 (S83) is a Phosphoserine. N98 and N137 each carry an N-linked (GlcNAc...) asparagine glycan.

Belongs to the IL-1 family. In terms of assembly, monomer. Interacts with TMED10; the interaction mediates the translocation from the cytoplasm into the ERGIC (endoplasmic reticulum-Golgi intermediate compartment) and thereby secretion. Interacts with IL1R1. Interacts with S100A13; this interaction is the first step in the export of IL1A, followed by direct translocation of this complex across the plasma membrane. Acetylated within its nuclear localization sequence, which impacts subcellular localization. Post-translationally, proteolytic processed by CAPN1 in a calcium-dependent manner. Cleavage from 31 kDa precursor to 18 kDa biologically active molecules. In terms of processing, phosphorylated. Phosphorylation greatly enhances susceptibility to digestion and promotes the conversion of pre-IL1A alpha to the biologically active IL1A.

The protein localises to the nucleus. Its subcellular location is the cytoplasm. It localises to the secreted. Functionally, cytokine constitutively present intracellularly in nearly all resting non-hematopoietic cells that plays an important role in inflammation and bridges the innate and adaptive immune systems. After binding to its receptor IL1R1 together with its accessory protein IL1RAP, forms the high affinity interleukin-1 receptor complex. Signaling involves the recruitment of adapter molecules such as MYD88, IRAK1 or IRAK4. In turn, mediates the activation of NF-kappa-B and the three MAPK pathways p38, p42/p44 and JNK pathways. Within the cell, acts as an alarmin and cell death results in its liberation in the extracellular space after disruption of the cell membrane to induce inflammation and alert the host to injury or damage. In addition to its role as a danger signal, which occurs when the cytokine is passively released by cell necrosis, directly senses DNA damage and acts as signal for genotoxic stress without loss of cell integrity. The chain is Interleukin-1 alpha (IL1A) from Canis lupus familiaris (Dog).